The chain runs to 266 residues: MKAVVLTLAVLFLTGSQARHFWQQDEPQSPWDRVKDLATVYVDVVKDGGRDYVAQFESSALGKQLNLKLLDNWDSLSSTVAKLREQIGPVTQEFWDNLEKETEVLRQEMNKDLEEVKKKVQPYLDEFQSKWHEEVELYRQKVAPLGAELREGARQKLQELQEKLSPLGEELRDRARTHVDALRAQLAPYGEQLRERLAARLQALKEGGGAALTEYRAKASEHLSALREKAKPALEDLRQGLLPVLENFRVSLLAAVDEATKKLNSQ.

An N-terminal signal peptide occupies residues 1–18 (MKAVVLTLAVLFLTGSQA). Repeat copies occupy residues 67–88 (LKLL…EQIG) and 89–110 (PVTQ…QEMN). The 10 X approximate tandem repeats stretch occupies residues 67–266 (LKLLDNWDSL…DEATKKLNSQ (200 aa)). M109 carries the post-translational modification Methionine sulfoxide. The 3; half-length repeat unit spans residues 111 to 121 (KDLEEVKKKVQ). Tandem repeats lie at residues 122 to 143 (PYLD…QKVA), 144 to 165 (PLGA…EKLS), 166 to 187 (PLGE…AQLA), 188 to 209 (PYGE…EGGG), and 210 to 231 (AALT…EKAK). A 9; half-length repeat occupies 232 to 242 (PALEDLRQGLL). Copy 10 of the repeat occupies 243 to 266 (PVLENFRVSLLAAVDEATKKLNSQ).

This sequence belongs to the apolipoprotein A1/A4/E family. As to quaternary structure, homodimer. Interacts with APOA1BP and CLU. Component of a sperm activating protein complex (SPAP), consisting of APOA1, an immunoglobulin heavy chain, an immunoglobulin light chain and albumin. Interacts with NDRG1. Interacts with SCGB3A2. Interacts with NAXE and YJEFN3. Post-translationally, glycosylated. In terms of processing, palmitoylated. Phosphorylation sites are present in the extracellular medium.

It localises to the secreted. Functionally, participates in the reverse transport of cholesterol from tissues to the liver for excretion by promoting cholesterol efflux from tissues and by acting as a cofactor for the lecithin cholesterol acyltransferase (LCAT). As part of the SPAP complex, activates spermatozoa motility. In Leptonychotes weddellii (Weddell seal), this protein is Apolipoprotein A-I (APOA1).